The chain runs to 173 residues: MEYNTSALCDIYMDQVDVVEPMFSNFGGRASFAGQITTVKCFEDNALIRETLEQDGVGRVLLVDGGGSLRRALLDGELAAIAEENEWEGIVVYGCVREVDELEDMNIGIQALASIPVGAAMQGVGEVDVPVNFGGVTFLPEDYLYADTTGIILSQEPLSADLEEDEEEPELLD.

This sequence belongs to the RraA family. In terms of assembly, homotrimer. Binds to both RNA-binding sites in the C-terminal region of Rne and to RhlB.

It is found in the cytoplasm. In terms of biological role, globally modulates RNA abundance by binding to RNase E (Rne) and regulating its endonucleolytic activity. Can modulate Rne action in a substrate-dependent manner by altering the composition of the degradosome. Modulates RNA-binding and helicase activities of the degradosome. The chain is Regulator of ribonuclease activity A from Vibrio vulnificus (strain CMCP6).